Here is a 382-residue protein sequence, read N- to C-terminus: Protein farnesyltransferase subunit beta (382 aa).

PFTB repeat units follow at residues 78-119, 129-170, 178-219, 226-268, and 286-328; these read CERA…CLCD, RDRL…SLVG, FEGT…ALLG, EIKL…VIVA, and PEKL…SSIA. (2E,6E)-farnesyl diphosphate is bound by residues 204–207 and 247–250; these read HGGY and RSNK. Zn(2+) contacts are provided by Asp253 and Cys255. 256-259 is a (2E,6E)-farnesyl diphosphate binding site; that stretch reads YSWW. His316 contacts Zn(2+).

It belongs to the protein prenyltransferase subunit beta family. In terms of assembly, heterodimer of an alpha(cwp1) and a beta(cpp1) subunit. It depends on Zn(2+) as a cofactor.

The catalysed reaction is L-cysteinyl-[protein] + (2E,6E)-farnesyl diphosphate = S-(2E,6E)-farnesyl-L-cysteinyl-[protein] + diphosphate. In terms of biological role, catalyzes the transfer of a farnesyl moiety from farnesyl diphosphate to a cysteine at the fourth position from the C-terminus of several proteins. The beta(cpp1) subunit is responsible for peptide-binding. The polypeptide is Protein farnesyltransferase subunit beta (cpp1) (Schizosaccharomyces pombe (strain 972 / ATCC 24843) (Fission yeast)).